The primary structure comprises 885 residues: Putative membrane protein YdgH (885 aa).

A run of 7 helical transmembrane segments spans residues Trp9–Leu29, Ile181–Val201, Val202–Phe222, Phe227–Leu247, Ile278–Phe298, Val304–Val324, and Val354–Thr374. The segment at Met498–Ala518 is disordered. Helical transmembrane passes span Met716–Met736, Met740–Val760, Val772–Leu792, Val817–Val837, and Ile847–Ile867.

This sequence belongs to the resistance-nodulation-cell division (RND) (TC 2.A.6) family. MmpL subfamily.

The protein localises to the cell membrane. This is Putative membrane protein YdgH (ydgH) from Bacillus subtilis (strain 168).